A 1079-amino-acid chain; its full sequence is Error-prone DNA polymerase (1079 aa).

It belongs to the DNA polymerase type-C family. DnaE2 subfamily.

The protein localises to the cytoplasm. It carries out the reaction DNA(n) + a 2'-deoxyribonucleoside 5'-triphosphate = DNA(n+1) + diphosphate. Functionally, DNA polymerase involved in damage-induced mutagenesis and translesion synthesis (TLS). It is not the major replicative DNA polymerase. This is Error-prone DNA polymerase from Ralstonia pickettii (strain 12J).